A 340-amino-acid chain; its full sequence is Ferrochelatase (340 aa).

Positions 189 and 292 each coordinate Fe cation.

Belongs to the ferrochelatase family.

It localises to the cytoplasm. It catalyses the reaction heme b + 2 H(+) = protoporphyrin IX + Fe(2+). It functions in the pathway porphyrin-containing compound metabolism; protoheme biosynthesis; protoheme from protoporphyrin-IX: step 1/1. Catalyzes the ferrous insertion into protoporphyrin IX. This chain is Ferrochelatase, found in Pseudomonas syringae pv. syringae (strain B728a).